Here is a 306-residue protein sequence, read N- to C-terminus: Nod factor export ATP-binding protein I (306 aa).

One can recognise an ABC transporter domain in the interval 8–238 (IDLVGVRKSF…HIGCNVIEIY (231 aa)). 40-47 (GPNGAGKS) contacts ATP.

The protein belongs to the ABC transporter superfamily. Lipooligosaccharide exporter (TC 3.A.1.102) family. As to quaternary structure, the complex is composed of two ATP-binding proteins (NodI) and two transmembrane proteins (NodJ).

It localises to the cell inner membrane. Part of the ABC transporter complex NodIJ involved in the export of the nodulation factors (Nod factors), the bacterial signal molecules that induce symbiosis and subsequent nodulation induction. Nod factors are LCO (lipo-chitin oligosaccharide), a modified beta-1,4-linked N-acetylglucosamine oligosaccharide. This subunit is responsible for energy coupling to the transport system. This is Nod factor export ATP-binding protein I from Bradyrhizobium diazoefficiens (strain JCM 10833 / BCRC 13528 / IAM 13628 / NBRC 14792 / USDA 110).